The primary structure comprises 40 residues: Photosystem II reaction center protein J (40 aa).

The chain crosses the membrane as a helical span at residues 8–28; it reads IPLWLISTVTGTLVIGLMGIF.

Belongs to the PsbJ family. In terms of assembly, PSII is composed of 1 copy each of membrane proteins PsbA, PsbB, PsbC, PsbD, PsbE, PsbF, PsbH, PsbI, PsbJ, PsbK, PsbL, PsbM, PsbT, PsbX, PsbY, PsbZ, Psb30/Ycf12, at least 3 peripheral proteins of the oxygen-evolving complex and a large number of cofactors. It forms dimeric complexes.

The protein resides in the plastid. It is found in the chloroplast thylakoid membrane. One of the components of the core complex of photosystem II (PSII). PSII is a light-driven water:plastoquinone oxidoreductase that uses light energy to abstract electrons from H(2)O, generating O(2) and a proton gradient subsequently used for ATP formation. It consists of a core antenna complex that captures photons, and an electron transfer chain that converts photonic excitation into a charge separation. This Ginkgo biloba (Ginkgo) protein is Photosystem II reaction center protein J.